Here is a 513-residue protein sequence, read N- to C-terminus: 2-isopropylmalate synthase (513 aa).

The 265-residue stretch at 4–268 (IKIFDTTLRD…ETGIKTELIY (265 aa)) folds into the Pyruvate carboxyltransferase domain. Positions 13, 203, 205, and 239 each coordinate Mn(2+). A regulatory domain region spans residues 392-513 (KLVHFHVHTG…GLLRKNGGAE (122 aa)).

It belongs to the alpha-IPM synthase/homocitrate synthase family. LeuA type 1 subfamily. In terms of assembly, homodimer. Mn(2+) is required as a cofactor.

It is found in the cytoplasm. It carries out the reaction 3-methyl-2-oxobutanoate + acetyl-CoA + H2O = (2S)-2-isopropylmalate + CoA + H(+). The protein operates within amino-acid biosynthesis; L-leucine biosynthesis; L-leucine from 3-methyl-2-oxobutanoate: step 1/4. Functionally, catalyzes the condensation of the acetyl group of acetyl-CoA with 3-methyl-2-oxobutanoate (2-ketoisovalerate) to form 3-carboxy-3-hydroxy-4-methylpentanoate (2-isopropylmalate). The polypeptide is 2-isopropylmalate synthase (Thermotoga maritima (strain ATCC 43589 / DSM 3109 / JCM 10099 / NBRC 100826 / MSB8)).